The primary structure comprises 365 residues: Putative agmatine deiminase (365 aa).

Agmatine-binding residues include glutamate 214 and aspartate 220. Cysteine 357 acts as the Amidino-cysteine intermediate in catalysis.

It belongs to the agmatine deiminase family. In terms of assembly, tetramer of two homodimers.

It carries out the reaction agmatine + H2O = N-carbamoylputrescine + NH4(+). The sequence is that of Putative agmatine deiminase from Enterococcus faecalis (strain ATCC 700802 / V583).